Here is a 194-residue protein sequence, read N- to C-terminus: Anaphase-promoting complex subunit CDC26 (194 aa).

The disordered stretch occupies residues 47 to 194 (EPMDQSEPPR…PSSNTRSHRH (148 aa)). Polar residues-rich tracts occupy residues 79–94 (GECT…TSAR) and 102–112 (LTLSTPVNPVS). 2 stretches are compositionally biased toward low complexity: residues 154 to 166 (DESP…PESP) and 174 to 194 (TPGN…SHRH).

Belongs to the CDC26 family. The APC/C complex is probably composed of at least 12 subunits: apc-2, apc-10, apc-11, cdc-26, emb-1, emb-27, emb-30, mat-1, mat-2, mat-3, such-1 and gfi-3.

It localises to the nucleus. It functions in the pathway protein modification; protein ubiquitination. Probable component of the anaphase promoting complex/cyclosome (APC/C), a cell cycle-regulated E3 ubiquitin ligase that controls progression through mitosis and the G1 phase of the cell cycle. The APC/C complex acts by mediating ubiquitination and subsequent degradation of target proteins. Developmental role in early embryogenesis and the metaphase to anaphase transition in meiosis and mitosis. Required for embryonic anterior-posterior axis formation. The sequence is that of Anaphase-promoting complex subunit CDC26 from Caenorhabditis elegans.